The primary structure comprises 665 residues: MDSSTLSPAVTATDAPIPSYERIRNAADISVIVIYFVVVMAVGLWAMFSTNRGTVGGFFLAGRSMVWWPIGASLFASNIGSGHFVGLAGTGAAAGIAMGGFEWNALVLVVVLGWIFVPIYIKAGVVTMPEYLRKRFGGKRIQIYLSVLSLLLYIFTKISADIFSGAIFINLALGLDIYLAIFILLAITALYTITGGLAAVIYTDTLQTAIMLVGSFILTGFAFNEVGGYEAFMDKYMKAIPTKVSNGNFTAKEECYTPRADSFHIFRDPITGDMPWPGLIFGLAILALWYWCTDQVIVQRCLSAKNMSHVKADCTLCGYLKLLPMFLMVMPGMISRILYTEKIACVLPEECQKYCGTPVGCTNIAYPTLVVELMPNGLRGLMLSVMMASLMSSLTSIFNSASTLFTMDIYTKIRKKASEKELMIAGRLFILVLIGISIAWVPIVQSAQSGQLFDYIQSITSYLGPPIAAVFLLAIFCKRVNEQGAFWGLILGFLIGISRMITEFAYGTGSCMEPSNCPKIICGVHYLYFAIILFVISVITILIISFLTKPIPDVHLYRWCWSLRNSKEERIDLDAGEEEDIPEDSKDTIEIDTEAPQKKKGCFRRAYDLFCGLDQDKGPKMTKEEEEAMKMKMTDTSEKPLWRTVVNINGIILLAVAVFCHAYFA.

Topologically, residues 1–24 (MDSSTLSPAVTATDAPIPSYERIR) are extracellular. The helical transmembrane segment at 25–47 (NAADISVIVIYFVVVMAVGLWAM) threads the bilayer. At 48–66 (FSTNRGTVGGFFLAGRSMV) the chain is on the cytoplasmic side. The helical transmembrane segment at 67–90 (WWPIGASLFASNIGSGHFVGLAGT) threads the bilayer. The Extracellular segment spans residues 91-95 (GAAAG). The helical transmembrane segment at 96–117 (IAMGGFEWNALVLVVVLGWIFV) threads the bilayer. Over 118-139 (PIYIKAGVVTMPEYLRKRFGGK) the chain is Cytoplasmic. The chain crosses the membrane as a helical span at residues 140 to 169 (RIQIYLSVLSLLLYIFTKISADIFSGAIFI). The Extracellular portion of the chain corresponds to 170–176 (NLALGLD). The chain crosses the membrane as a helical span at residues 177–193 (IYLAIFILLAITALYTI). Residues 194 to 202 (TGGLAAVIY) are Cytoplasmic-facing. A helical membrane pass occupies residues 203-221 (TDTLQTAIMLVGSFILTGF). Over 222–275 (AFNEVGGYEAFMDKYMKAIPTKVSNGNFTAKEECYTPRADSFHIFRDPITGDMP) the chain is Extracellular. An N-linked (GlcNAc...) asparagine glycan is attached at N248. Cystine bridges form between C255–C511, C255–C611, C345–C351, C355–C361, and C517–C522. A helical transmembrane segment spans residues 276–295 (WPGLIFGLAILALWYWCTDQ). Residues 296 to 309 (VIVQRCLSAKNMSH) are Cytoplasmic-facing. Residues 310-331 (VKADCTLCGYLKLLPMFLMVMP) form a helical membrane-spanning segment. The Extracellular segment spans residues 332-375 (GMISRILYTEKIACVLPEECQKYCGTPVGCTNIAYPTLVVELMP). Residues 376-406 (NGLRGLMLSVMMASLMSSLTSIFNSASTLFT) form a helical membrane-spanning segment. Topologically, residues 407 to 422 (MDIYTKIRKKASEKEL) are cytoplasmic. The helical transmembrane segment at 423-444 (MIAGRLFILVLIGISIAWVPIV) threads the bilayer. Residues 445–451 (QSAQSGQ) are Extracellular-facing. A helical membrane pass occupies residues 452–477 (LFDYIQSITSYLGPPIAAVFLLAIFC). Q457 provides a ligand contact to D-glucose. Over 478–481 (KRVN) the chain is Cytoplasmic. A helical membrane pass occupies residues 482 to 504 (EQGAFWGLILGFLIGISRMITEF). Residues 505–525 (AYGTGSCMEPSNCPKIICGVH) are Extracellular-facing. Residues 526–547 (YLYFAIILFVISVITILIISFL) form a helical membrane-spanning segment. The Cytoplasmic segment spans residues 548–645 (TKPIPDVHLY…TSEKPLWRTV (98 aa)). S585 bears the Phosphoserine mark. T588 carries the post-translational modification Phosphothreonine. The helical transmembrane segment at 646 to 663 (VNINGIILLAVAVFCHAY) threads the bilayer. The Extracellular segment spans residues 664–665 (FA).

It belongs to the sodium:solute symporter (SSF) (TC 2.A.21) family. In terms of processing, N-glycosylation is not necessary for the cotransporter function. Expressed in enterocytes and enteroendocrine cells of small intestine (at protein level). Expressed in S3 segments of renal proximal tubules (at protein level). Expressed in endometrial glandular and epithelial cells (at protein level).

Its subcellular location is the apical cell membrane. It catalyses the reaction D-glucose(out) + 2 Na(+)(out) = D-glucose(in) + 2 Na(+)(in). It carries out the reaction D-galactose(out) + 2 Na(+)(out) = D-galactose(in) + 2 Na(+)(in). Its activity is regulated as follows. Enhanced by the interaction with PDZK1IP1/MAP17; but unlike SLC5A2/SGLT2, PDZK1IP1 is not essential for SLC5A1 transporter activity. Possibly modulated by cholesterol binding. Its function is as follows. Electrogenic Na(+)-coupled sugar symporter that actively transports D-glucose or D-galactose at the plasma membrane, with a Na(+) to sugar coupling ratio of 2:1. Transporter activity is driven by a transmembrane Na(+) electrochemical gradient set by the Na(+)/K(+) pump. Has a primary role in the transport of dietary monosaccharides from enterocytes to blood. Responsible for the absorption of D-glucose or D-galactose across the apical brush-border membrane of enterocytes, whereas basolateral exit is provided by GLUT2. Additionally, functions as a D-glucose sensor in enteroendocrine cells, triggering the secretion of the incretins GCG and GIP that control food intake and energy homeostasis. Together with SGLT2, functions in reabsorption of D-glucose from glomerular filtrate, playing a nonredundant role in the S3 segment of the proximal tubules. Transports D-glucose into endometrial epithelial cells, controlling glycogen synthesis and nutritional support for the embryo as well as the decidual transformation of endometrium prior to conception. Acts as a water channel enabling passive water transport in response to the osmotic gradient created upon sugar and Na(+) uptake. Has high water conductivity comparable to aquaporins and therefore is expected to play an important role in transepithelial water permeability, especially in the small intestine. In Mus musculus (Mouse), this protein is Sodium/glucose cotransporter 1 (Slc5a1).